We begin with the raw amino-acid sequence, 474 residues long: Photosystem II CP43 reaction center protein (474 aa).

A propeptide spanning residues 1–14 is cleaved from the precursor; that stretch reads MKTLYSLRRFYPVE. Thr15 is subject to N-acetylthreonine. At Thr15 the chain carries Phosphothreonine. Helical transmembrane passes span 69 to 93, 134 to 155, 178 to 201, 256 to 276, and 292 to 313; these read LFEVAHFVPEKPMYEQGLILLPHLA, LLGPETLEESFPFFGYVWKDRN, KALYFGGVYDTWAPGGGEMLRKIT, KPFAWARRALVWSGEAYLSYS, and WFNNTAYPSEFYGPTGPEASQA. [CaMn4O5] cluster is bound at residue Glu368. Residues 448-472 traverse the membrane as a helical segment; sequence RARAAAAGFEKGIDRDFEPVLSMTP.

Belongs to the PsbB/PsbC family. PsbC subfamily. In terms of assembly, PSII is composed of 1 copy each of membrane proteins PsbA, PsbB, PsbC, PsbD, PsbE, PsbF, PsbH, PsbI, PsbJ, PsbK, PsbL, PsbM, PsbT, PsbX, PsbY, PsbZ, Psb30/Ycf12, at least 3 peripheral proteins of the oxygen-evolving complex and a large number of cofactors. It forms dimeric complexes. Binds multiple chlorophylls and provides some of the ligands for the Ca-4Mn-5O cluster of the oxygen-evolving complex. It may also provide a ligand for a Cl- that is required for oxygen evolution. PSII binds additional chlorophylls, carotenoids and specific lipids. is required as a cofactor.

Its subcellular location is the plastid. It localises to the chloroplast thylakoid membrane. Its function is as follows. One of the components of the core complex of photosystem II (PSII). It binds chlorophyll and helps catalyze the primary light-induced photochemical processes of PSII. PSII is a light-driven water:plastoquinone oxidoreductase, using light energy to abstract electrons from H(2)O, generating O(2) and a proton gradient subsequently used for ATP formation. The polypeptide is Photosystem II CP43 reaction center protein (Citrus sinensis (Sweet orange)).